Here is a 185-residue protein sequence, read N- to C-terminus: Crossover junction endodeoxyribonuclease RuvC (185 aa).

Residues Asp7, Glu66, and Asp137 contribute to the active site. 3 residues coordinate Mg(2+): Asp7, Glu66, and Asp137.

Belongs to the RuvC family. As to quaternary structure, homodimer which binds Holliday junction (HJ) DNA. The HJ becomes 2-fold symmetrical on binding to RuvC with unstacked arms; it has a different conformation from HJ DNA in complex with RuvA. In the full resolvosome a probable DNA-RuvA(4)-RuvB(12)-RuvC(2) complex forms which resolves the HJ. Mg(2+) is required as a cofactor.

It localises to the cytoplasm. The enzyme catalyses Endonucleolytic cleavage at a junction such as a reciprocal single-stranded crossover between two homologous DNA duplexes (Holliday junction).. The RuvA-RuvB-RuvC complex processes Holliday junction (HJ) DNA during genetic recombination and DNA repair. Endonuclease that resolves HJ intermediates. Cleaves cruciform DNA by making single-stranded nicks across the HJ at symmetrical positions within the homologous arms, yielding a 5'-phosphate and a 3'-hydroxyl group; requires a central core of homology in the junction. The consensus cleavage sequence is 5'-(A/T)TT(C/G)-3'. Cleavage occurs on the 3'-side of the TT dinucleotide at the point of strand exchange. HJ branch migration catalyzed by RuvA-RuvB allows RuvC to scan DNA until it finds its consensus sequence, where it cleaves and resolves the cruciform DNA. The protein is Crossover junction endodeoxyribonuclease RuvC of Anaeromyxobacter dehalogenans (strain 2CP-1 / ATCC BAA-258).